The following is a 333-amino-acid chain: Heat shock transcription factor, X-linked member 4 (333 aa).

The interval 1–66 is disordered; sequence MASQNTEQEY…QDNSPPEDRN (66 aa). The span at 29–39 shows a compositional bias: low complexity; that stretch reads GSSPDPNPDSS. The segment covering 49 to 60 has biased composition (polar residues); it reads AMSQDPGSQDNS. The DNA-binding element occupies 79 to 182; that stretch reads FRLSFPRKLW…PRLLENIQRK (104 aa). Positions 227–275 are disordered; that stretch reads QGAPSVQGPSGTQSFRRSGMWSKKSATRHPLGNGPPQEPNGPSWEGTSG. The span at 228 to 242 shows a compositional bias: polar residues; the sequence is GAPSVQGPSGTQSFR.

Belongs to the HSF family.

The protein resides in the nucleus. The protein is Heat shock transcription factor, X-linked member 4 of Homo sapiens (Human).